The primary structure comprises 61 residues: Bactridin-1 (61 aa).

The region spanning 1-61 (KDGYIIEHRG…KIFDSNNLKC (61 aa)) is the LCN-type CS-alpha/beta domain. 4 disulfides stabilise this stretch: Cys11-Cys61, Cys15-Cys37, Cys23-Cys42, and Cys27-Cys44.

It belongs to the long (4 C-C) scorpion toxin superfamily. Sodium channel inhibitor family. Beta subfamily. Expressed by the venom gland.

The protein resides in the secreted. Functionally, shows antibacterial activity against both Gram-positive bacteria (B.subtilis, M.luteus, E.faecalis) and Gram-negative bacteria (P.aeruginosa, Y.enterocolitica, A.calcoaceticus). Modifies membrane sodium permeability on Y.enterocolitica. Is toxic to cockroaches and crabs, but is not toxic to mice. Does not induce haemolysis in human erythrocytes. Acts by inhibiting the sodium (Nav) currents. In Tityus discrepans (Venezuelan scorpion), this protein is Bactridin-1.